Consider the following 151-residue polypeptide: uncharacterized protein (151 aa).

The span at 40–57 shows a compositional bias: polar residues; sequence QMNRRNSENNTFDASNVG. The tract at residues 40 to 125 is disordered; sequence QMNRRNSENN…KRQPHYAEPI (86 aa). Residues 83–110 are compositionally biased toward low complexity; that stretch reads QRQNGRQHQHAGQQQPQHQHTQSQTRQT.

This is an uncharacterized protein from Bacillus subtilis (strain 168).